Here is a 91-residue protein sequence, read N- to C-terminus: Large ribosomal subunit protein bL27 (91 aa).

Over residues 1 to 13 (MATKKSGGSSCNG) the composition is skewed to polar residues. A disordered region spans residues 1–20 (MATKKSGGSSCNGRDSRGRR).

Belongs to the bacterial ribosomal protein bL27 family.

The protein is Large ribosomal subunit protein bL27 of Anaplasma phagocytophilum (strain HZ).